Consider the following 284-residue polypeptide: uncharacterized protein (284 aa).

Residues 12 to 32 traverse the membrane as a helical segment; sequence ILFILFVVAFCVYLVPRVAIN.

The protein belongs to the serine esterase family.

The protein localises to the membrane. This is an uncharacterized protein from Escherichia coli (strain K12).